A 308-amino-acid chain; its full sequence is MTSKLEQLKQFTTVVADTGDLDAITRLKPVDATTNPSLLLKAAAIPGYADLLEQVKADTKGNVDLACDKFAVSVGAGILKVIPGRISTEVDARLSFDEPALLKKAHQLIELYEAAGIKRDRVLIKLASTWEGIRAAEKLEKEGIQTNLTLLFSFAQAQACADAGVFLISPFVGRIYDWYKKSTGKEYIGAEDPGVQSVTRIYDYYKANGYNTVVMGASFRNIGQIEQLAGCDRLTISPELLVQLSDDQGELPRILKPGNAGEAKQQLNESQFRWAMNEDAMATEKLAEGIRQFARDQEKLEALMADKA.

Residue Lys-125 is the Schiff-base intermediate with substrate of the active site.

It belongs to the transaldolase family. Type 1 subfamily. Homodimer.

The protein localises to the cytoplasm. The catalysed reaction is D-sedoheptulose 7-phosphate + D-glyceraldehyde 3-phosphate = D-erythrose 4-phosphate + beta-D-fructose 6-phosphate. It participates in carbohydrate degradation; pentose phosphate pathway; D-glyceraldehyde 3-phosphate and beta-D-fructose 6-phosphate from D-ribose 5-phosphate and D-xylulose 5-phosphate (non-oxidative stage): step 2/3. Functionally, transaldolase is important for the balance of metabolites in the pentose-phosphate pathway. The polypeptide is Transaldolase (Pseudomonas entomophila (strain L48)).